We begin with the raw amino-acid sequence, 566 residues long: NAD-dependent malic enzyme (566 aa).

Residue Tyr104 is the Proton donor of the active site. Arg157 serves as a coordination point for NAD(+). Lys175 (proton acceptor) is an active-site residue. 3 residues coordinate a divalent metal cation: Glu246, Asp247, and Asp270. Asp270 and Asn419 together coordinate NAD(+).

Belongs to the malic enzymes family. Homotetramer. The cofactor is Mg(2+). Mn(2+) is required as a cofactor.

The enzyme catalyses (S)-malate + NAD(+) = pyruvate + CO2 + NADH. It carries out the reaction oxaloacetate + H(+) = pyruvate + CO2. The sequence is that of NAD-dependent malic enzyme from Cronobacter sakazakii (strain ATCC BAA-894) (Enterobacter sakazakii).